The sequence spans 240 residues: PF03932 family protein CutC (240 aa).

Belongs to the CutC family.

The protein resides in the cytoplasm. This chain is PF03932 family protein CutC, found in Xanthomonas axonopodis pv. citri (strain 306).